The following is a 141-amino-acid chain: Ubiquitin-like protein ATG12 (141 aa).

A disordered region spans residues 24–54 (LELSPETAIPEPPSSVAVSPGTEEPPGDTKK). A Glycyl lysine isopeptide (Gly-Lys) (interchain with K-? in acceptor protein) cross-link involves residue G141.

It belongs to the ATG12 family. Forms a conjugate with ATG5. Part of the minor complex composed of 4 sets of ATG12-ATG5 and ATG16L1 (400 kDa); this complex interacts with ATG3 leading to disruption of ATG7 interaction and promotion of ATG8-like proteins lipidation. Forms an 800-kDa complex composed of ATG12-ATG5 and ATG16L2. Interacts with DHX58/RIG-1, IFIH1/MDA5 and MAVS/IPS-1 in monomeric form as well as in ATG12-ATG5 conjugate. The interaction with MAVS is further enhanced upon vesicular stomatitis virus (VSV) infection. Interacts with ATG3; this interaction is essential for phosphatidylethanolamine (PE)-conjugated ATG8-like proteins formation. Interacts with ATG7. Interacts with ATG10. The ATG12-ATG5 conjugate interacts with RAB33A; this interaction is bridged by ATG16L1 and promotes ATG12-ATG5-ATG16L1 complex recruitment to phagophores. Interacts with TECPR1. Interacts with SH3BGRL. The ATG12-ATG5 conjugate interacts with PDCD6IP (via the BRO1 domain); this interaction is bridged by ATG12 and promotes multiple PDCD6IP-mediated functions such as endolysosomal trafficking, macroautophagy and exosome biogenesis. Acetylated by EP300.

Its subcellular location is the cytoplasm. It localises to the preautophagosomal structure membrane. Functionally, ubiquitin-like protein involved in autophagy vesicles formation. Conjugation with ATG5 through a ubiquitin-like conjugating system involving also ATG7 as an E1-like activating enzyme and ATG10 as an E2-like conjugating enzyme, is essential for its function. The ATG12-ATG5 conjugate acts as an E3-like enzyme which is required for lipidation of ATG8 family proteins and their association to the vesicle membranes. The ATG12-ATG5 conjugate also negatively regulates the innate antiviral immune response by blocking the type I IFN production pathway through direct association with RARRES3 and MAVS. Also plays a role in translation or delivery of incoming viral RNA to the translation apparatus. As part of the ATG8 conjugation system with ATG5 and ATG16L1, required for recruitment of LRRK2 to stressed lysosomes and induction of LRRK2 kinase activity in response to lysosomal stress. This Rattus norvegicus (Rat) protein is Ubiquitin-like protein ATG12.